The following is a 182-amino-acid chain: PRA1 family protein D (182 aa).

Residue Ala2 is modified to N-acetylalanine. A run of 3 helical transmembrane segments spans residues 68 to 88 (LITR…WFFL), 107 to 127 (IVAV…GVWL), and 129 to 149 (ALTT…LRGT). Residues 163-182 (PMLSTSGGGNDGARGDYSGI) are disordered.

Belongs to the PRA1 family. In terms of assembly, interacts with PRA1F2 and PRA1F3. Interacts with the cauliflower mosaic virus (CaMV) movement protein (via N-terminus). Expressed in hypocotyls, roots, lateral roots, lateral root caps, columella cells, leaves, shoot apex, stems and flowers.

It localises to the endosome membrane. Functionally, may be involved in both secretory and endocytic intracellular trafficking in the endosomal/prevacuolar compartments. This Arabidopsis thaliana (Mouse-ear cress) protein is PRA1 family protein D (PRA1D).